A 141-amino-acid polypeptide reads, in one-letter code: ATP synthase epsilon chain (141 aa).

The protein belongs to the ATPase epsilon chain family. F-type ATPases have 2 components, CF(1) - the catalytic core - and CF(0) - the membrane proton channel. CF(1) has five subunits: alpha(3), beta(3), gamma(1), delta(1), epsilon(1). CF(0) has three main subunits: a, b and c.

The protein localises to the cell inner membrane. Produces ATP from ADP in the presence of a proton gradient across the membrane. In Pseudomonas aeruginosa (strain LESB58), this protein is ATP synthase epsilon chain.